Consider the following 252-residue polypeptide: Thiazole synthase (252 aa).

Catalysis depends on lysine 91, which acts as the Schiff-base intermediate with DXP. 1-deoxy-D-xylulose 5-phosphate is bound by residues glycine 152, 179 to 180 (AG), and 201 to 202 (NT).

Belongs to the ThiG family. Homotetramer. Forms heterodimers with either ThiH or ThiS.

It localises to the cytoplasm. The catalysed reaction is [ThiS sulfur-carrier protein]-C-terminal-Gly-aminoethanethioate + 2-iminoacetate + 1-deoxy-D-xylulose 5-phosphate = [ThiS sulfur-carrier protein]-C-terminal Gly-Gly + 2-[(2R,5Z)-2-carboxy-4-methylthiazol-5(2H)-ylidene]ethyl phosphate + 2 H2O + H(+). It functions in the pathway cofactor biosynthesis; thiamine diphosphate biosynthesis. In terms of biological role, catalyzes the rearrangement of 1-deoxy-D-xylulose 5-phosphate (DXP) to produce the thiazole phosphate moiety of thiamine. Sulfur is provided by the thiocarboxylate moiety of the carrier protein ThiS. In vitro, sulfur can be provided by H(2)S. This chain is Thiazole synthase, found in Erwinia amylovora (Fire blight bacteria).